Reading from the N-terminus, the 143-residue chain is Hemoglobin subunit alpha (143 aa).

The Globin domain maps to 3–143; the sequence is KLSGEDKANV…TMRLCISKYR (141 aa). An O2-binding site is contributed by His-60. His-89 is a binding site for heme b.

It belongs to the globin family. As to quaternary structure, heterotetramer of two alpha chains and two beta chains. Red blood cells.

Involved in oxygen transport from the lung to the various peripheral tissues. The sequence is that of Hemoglobin subunit alpha (HBA) from Ambystoma mexicanum (Axolotl).